A 600-amino-acid polypeptide reads, in one-letter code: MENSDSNDKGSDQSAAQRRSQMDRLDREEAFYQFVNNLSEEDYRLMRDNNLLGTPGESTEEELLRRLQQIKEGPPPQSPDENRAGESSDDVTNSDSIIDWLNSVRQTGNTTRSGQRGNQSWRAVSRTNPNSGDFRFSLEINVNRNNGSQTSENESEPSTRRLSVENMESSSQRQMENSASESASARPSRAERNSAEAVTEVPTTRAQRRARSRSPEHRRTRARAERSRSPLQPTSEIPRRAPTLEQSSENEPEGSSRTRHHVTLRQQISGPELLGRGLFAASGSRNPSQGTSSSDTGSNSESSGSGQRPPTIVLDLQVRRVRPGEYRQRDSIASRTRSRSQAPNNTVTYESERGGFRRTFSRSERAGVRTYVSTIRIPIRRILNTGLSETTSVAIQTMLRQIMTGFGELSYFMYSDSDSEPSASVSSRNVERVESRNGRGSSGGGNSSGSSSSSSPSPSSSGESSESSSEMFEGSSEGGSSGPSRRDGRHRAPVTFDESGSLPFLSLAQFFLLNEDDEDQPRGLTKEQIDNLAMRSFGENDALKTCSVCITEYTEGNKLRKLPCSHEYHVHCIDRWLSENSTCPICRRAVLSSGNRESVV.

Position 1 is an N-acetylmethionine (M1). A compositionally biased stretch (basic and acidic residues) spans 1–11; it reads MENSDSNDKGS. 3 disordered regions span residues 1-24, 49-355, and 417-497; these read MENS…QMDR, NNLL…ERGG, and SDSE…VTFD. 2 stretches are compositionally biased toward polar residues: residues 103–131 and 140–152; these read SVRQ…NPNS and INVN…QTSE. Residue S163 is modified to Phosphoserine. Positions 166-175 are enriched in polar residues; it reads NMESSSQRQM. Positions 176-187 are enriched in low complexity; the sequence is ENSASESASARP. Phosphoserine occurs at positions 194, 227, and 229. The span at 213 to 228 shows a compositional bias: basic and acidic residues; the sequence is RSPEHRRTRARAERSR. The segment covering 244 to 255 has biased composition (polar residues); the sequence is LEQSSENEPEGS. S269 bears the Phosphoserine mark. Residues 288 to 306 are compositionally biased toward low complexity; the sequence is SQGTSSSDTGSNSESSGSG. The segment covering 322 to 332 has biased composition (basic and acidic residues); sequence RPGEYRQRDSI. Positions 333–349 are enriched in polar residues; sequence ASRTRSRSQAPNNTVTY. A compositionally biased stretch (low complexity) spans 448 to 475; that stretch reads SGSSSSSSPSPSSSGESSESSSEMFEGS. The segment at 546–587 adopts an RING-type zinc-finger fold; that stretch reads CSVCITEYTEGNKLRKLPCSHEYHVHCIDRWLSENSTCPICR. A PDZ-binding motif is present at residues 597–600; that stretch reads ESVV.

This sequence belongs to the RNF12 family. Interacts (via N-terminus) with TERF1. Interacts (via C-terminus) with ESR1. Interacts with LIM/homeobox factors such as LHX3. Interacts with LDB1, LDB2 and SIN3A. Interacts with LIMK1.

It localises to the nucleus. It catalyses the reaction S-ubiquitinyl-[E2 ubiquitin-conjugating enzyme]-L-cysteine + [acceptor protein]-L-lysine = [E2 ubiquitin-conjugating enzyme]-L-cysteine + N(6)-ubiquitinyl-[acceptor protein]-L-lysine.. The protein operates within protein modification; protein ubiquitination. Its function is as follows. E3 ubiquitin-protein ligase that acts as a negative coregulator for LIM homeodomain transcription factors by mediating the ubiquitination and subsequent degradation of LIM cofactors LDB1 and LDB2 and by mediating the recruitment the SIN3a/histone deacetylase corepressor complex. Ubiquitination and degradation of LIM cofactors LDB1 and LDB2 allows DNA-bound LIM homeodomain transcription factors to interact with other protein partners such as RLIM. Plays a role in telomere length-mediated growth suppression by mediating the ubiquitination and degradation of TERF1. By targeting ZFP42 for degradation, acts as an activator of random inactivation of X chromosome in the embryo, a stochastic process in which one X chromosome is inactivated to minimize sex-related dosage differences of X-encoded genes in somatic cells of female placental mammals. This is E3 ubiquitin-protein ligase RLIM (Rlim) from Mus musculus (Mouse).